A 103-amino-acid chain; its full sequence is Phosphoribosyl-ATP pyrophosphatase (103 aa).

A disordered region spans residues 79–103 (SVQAELERREGKLSTTRDRKEIDEL). A compositionally biased stretch (basic and acidic residues) spans 83-103 (ELERREGKLSTTRDRKEIDEL).

It belongs to the PRA-PH family.

It localises to the cytoplasm. The enzyme catalyses 1-(5-phospho-beta-D-ribosyl)-ATP + H2O = 1-(5-phospho-beta-D-ribosyl)-5'-AMP + diphosphate + H(+). It participates in amino-acid biosynthesis; L-histidine biosynthesis; L-histidine from 5-phospho-alpha-D-ribose 1-diphosphate: step 2/9. In Listeria welshimeri serovar 6b (strain ATCC 35897 / DSM 20650 / CCUG 15529 / CIP 8149 / NCTC 11857 / SLCC 5334 / V8), this protein is Phosphoribosyl-ATP pyrophosphatase.